Consider the following 75-residue polypeptide: U6-lycotoxin-Ls1e (75 aa).

The N-terminal stretch at 1-21 (MKLLLFTALVLVVISLIEVEA) is a signal peptide. The propeptide occupies 22-25 (ENER).

It belongs to the neurotoxin 19 (CSTX) family. 06 (U6-Lctx) subfamily. Contains 4 disulfide bonds. As to expression, expressed by the venom gland.

The protein resides in the secreted. This chain is U6-lycotoxin-Ls1e, found in Lycosa singoriensis (Wolf spider).